Here is a 500-residue protein sequence, read N- to C-terminus: MENPLCVSIFLFYCILIQSSAHGQSLGPESFGRRSRAAETNKTPQETRTKFLLFRGETDKGCQILLNHSDTLQQCGFNSSLPLVMIVHGWLVDDILEDWVWEMVAALKSQLAQSVNVGLAEWVTLAHNHYTTAVRNTRLVGQEIAALLQWLQESVQFSPSHVHLIGYSLGAHVSGFAGSYMSRKHKIGRITGLDAAGPLFEKASLSDRLSPDDANFVDAIHTFTWEHMGLSVGMKQPIAHYDFYPNGGSYQPGCHFLELYKHFAKHGLNAITRTVKCAHERSVHLFIDSLLHADMQSMAYLCRDMDRFSQGLCLSCKKGRCNTLGYHTRQERQSKKSKSLFLVTRAQSPFKVYHYQFKIRFINQTENPVEPTFTVSFLGTRGERQKIPITLSKGITSNETYSFLITLDVDIGELIMIKFKWENRMVWSNVWNTVQTIIPWGRGSLHSGLALKSIRVKVGETQQRMTFCSENMNDLLLHPAREKTFVRCEANSETLKRKIR.

A signal peptide spans 1–21 (MENPLCVSIFLFYCILIQSSA). The interval 23 to 44 (GQSLGPESFGRRSRAAETNKTP) is disordered. N-linked (GlcNAc...) asparagine glycans are attached at residues N67 and N78. The active-site Nucleophile is S168. Catalysis depends on D194, which acts as the Charge relay system. The tract at residues 254 to 277 (CHFLELYKHFAKHGLNAITRTVKC) is essential for determining substrate specificity. The active-site Charge relay system is the H279. The region spanning 353 to 487 (YHYQFKIRFI…HPAREKTFVR (135 aa)) is the PLAT domain. N-linked (GlcNAc...) asparagine glycans are attached at residues N363 and N398.

This sequence belongs to the AB hydrolase superfamily. Lipase family. As to quaternary structure, homodimer.

The protein localises to the secreted. The enzyme catalyses a triacylglycerol + H2O = a diacylglycerol + a fatty acid + H(+). The catalysed reaction is a 1-acyl-sn-glycero-3-phosphocholine + H2O = sn-glycerol 3-phosphocholine + a fatty acid + H(+). It catalyses the reaction a 1,2-diacyl-sn-glycero-3-phosphocholine + H2O = a 2-acyl-sn-glycero-3-phosphocholine + a fatty acid + H(+). It carries out the reaction 1,2,3-tri-(9Z-octadecenoyl)-glycerol + H2O = di-(9Z)-octadecenoylglycerol + (9Z)-octadecenoate + H(+). The enzyme catalyses 1,2-di-(9Z-octadecenoyl)-sn-glycero-3-phosphocholine + H2O = (9Z-octadecenoyl)-sn-glycero-3-phosphocholine + (9Z)-octadecenoate + H(+). The catalysed reaction is 1,2,3-tributanoylglycerol + H2O = dibutanoylglycerol + butanoate + H(+). It catalyses the reaction 1,2-dihexadecanoyl-sn-glycero-3-phosphocholine + H2O = hexadecanoyl-sn-glycero-3-phosphocholine + hexadecanoate + H(+). It carries out the reaction 1,2-di-(9Z-octadecenoyl)-sn-glycerol + H2O = 2-(9Z-octadecenoyl)-glycerol + (9Z)-octadecenoate + H(+). The enzyme catalyses 1,2,3-tri-(9Z-octadecenoyl)-glycerol + H2O = 2,3-di-(9Z)-octadecenoyl-sn-glycerol + (9Z)-octadecenoate + H(+). The catalysed reaction is 1-(9Z-octadecenoyl)-sn-glycero-3-phospho-L-serine + H2O = sn-glycero-3-phospho-L-serine + (9Z)-octadecenoate + H(+). It catalyses the reaction 1-hexadecanoyl-sn-glycero-3-phosphocholine + H2O = sn-glycerol 3-phosphocholine + hexadecanoate + H(+). It carries out the reaction 1,3-di-(9Z-octadecenoyl)-glycerol + H2O = 3-(9Z-octadecenoyl)-sn-glycerol + (9Z)-octadecenoate + H(+). In terms of biological role, catalyzes the hydrolysis of triglycerides and phospholipids present in circulating plasma lipoproteins, including chylomicrons, intermediate density lipoproteins (IDL), low density lipoproteins (LDL) of large size and high density lipoproteins (HDL), releasing free fatty acids (FFA) and smaller lipoprotein particles. Also exhibits lysophospholipase activity. Can hydrolyze both neutral lipid and phospholipid substrates but shows a greater binding affinity for neutral lipid substrates than phospholipid substrates. In native LDL, preferentially hydrolyzes the phosphatidylcholine species containing polyunsaturated fatty acids at sn-2 position. In Bos taurus (Bovine), this protein is Hepatic triacylglycerol lipase (LIPC).